The primary structure comprises 333 residues: Adenosine deaminase (333 aa).

Zn(2+) contacts are provided by His12 and His14. Residues His14, Asp16, and Gly170 each coordinate substrate. Residue His197 coordinates Zn(2+). Glu200 serves as the catalytic Proton donor. A Zn(2+)-binding site is contributed by Asp278. Residue Asp279 participates in substrate binding.

This sequence belongs to the metallo-dependent hydrolases superfamily. Adenosine and AMP deaminases family. Adenosine deaminase subfamily. Requires Zn(2+) as cofactor.

The enzyme catalyses adenosine + H2O + H(+) = inosine + NH4(+). It carries out the reaction 2'-deoxyadenosine + H2O + H(+) = 2'-deoxyinosine + NH4(+). Catalyzes the hydrolytic deamination of adenosine and 2-deoxyadenosine. The protein is Adenosine deaminase of Escherichia coli (strain SE11).